The following is a 277-amino-acid chain: Large ribosomal subunit protein uL2 (277 aa).

The interval 227-277 (VMNPVDHPHGGGEGRTSGGRHPVTPWGVPTKGKKTRSKTKASDRLIMRRRK) is disordered. The segment covering 266–277 (KASDRLIMRRRK) has biased composition (basic and acidic residues).

This sequence belongs to the universal ribosomal protein uL2 family. In terms of assembly, part of the 50S ribosomal subunit. Forms a bridge to the 30S subunit in the 70S ribosome.

Functionally, one of the primary rRNA binding proteins. Required for association of the 30S and 50S subunits to form the 70S ribosome, for tRNA binding and peptide bond formation. It has been suggested to have peptidyltransferase activity; this is somewhat controversial. Makes several contacts with the 16S rRNA in the 70S ribosome. The protein is Large ribosomal subunit protein uL2 of Magnetococcus marinus (strain ATCC BAA-1437 / JCM 17883 / MC-1).